Reading from the N-terminus, the 92-residue chain is Large ribosomal subunit protein eL31 (92 aa).

This sequence belongs to the eukaryotic ribosomal protein eL31 family.

This is Large ribosomal subunit protein eL31 from Pyrobaculum arsenaticum (strain DSM 13514 / JCM 11321 / PZ6).